The sequence spans 315 residues: Mycothiol acetyltransferase (315 aa).

N-acetyltransferase domains lie at 8–145 (VETS…LPLD) and 163–315 (VSLR…DATA). Glu-39 is a binding site for 1D-myo-inositol 2-(L-cysteinylamino)-2-deoxy-alpha-D-glucopyranoside. Residues 81 to 83 (LVV) and 89 to 94 (HHGVGT) contribute to the acetyl-CoA site. Positions 190, 229, and 243 each coordinate 1D-myo-inositol 2-(L-cysteinylamino)-2-deoxy-alpha-D-glucopyranoside. Residue 247 to 249 (LGV) coordinates acetyl-CoA. Residue Tyr-281 coordinates 1D-myo-inositol 2-(L-cysteinylamino)-2-deoxy-alpha-D-glucopyranoside. Residue 286–291 (NTVAIR) coordinates acetyl-CoA.

It belongs to the acetyltransferase family. MshD subfamily. As to quaternary structure, monomer.

The enzyme catalyses 1D-myo-inositol 2-(L-cysteinylamino)-2-deoxy-alpha-D-glucopyranoside + acetyl-CoA = mycothiol + CoA + H(+). Catalyzes the transfer of acetyl from acetyl-CoA to desacetylmycothiol (Cys-GlcN-Ins) to form mycothiol. This Sanguibacter keddieii (strain ATCC 51767 / DSM 10542 / NCFB 3025 / ST-74) protein is Mycothiol acetyltransferase.